The primary structure comprises 203 residues: Glycerol-3-phosphate acyltransferase (203 aa).

The next 5 membrane-spanning stretches (helical) occupy residues 4-24, 56-76, 80-100, 115-135, and 149-169; these read IAYL…AVIF, LGVL…GFYL, ISVI…PVFF, IIPM…FVFL, and LIVP…VALV.

Belongs to the PlsY family. In terms of assembly, probably interacts with PlsX.

It localises to the cell inner membrane. It catalyses the reaction an acyl phosphate + sn-glycerol 3-phosphate = a 1-acyl-sn-glycero-3-phosphate + phosphate. The protein operates within lipid metabolism; phospholipid metabolism. In terms of biological role, catalyzes the transfer of an acyl group from acyl-phosphate (acyl-PO(4)) to glycerol-3-phosphate (G3P) to form lysophosphatidic acid (LPA). This enzyme utilizes acyl-phosphate as fatty acyl donor, but not acyl-CoA or acyl-ACP. This chain is Glycerol-3-phosphate acyltransferase, found in Glaesserella parasuis serovar 5 (strain SH0165) (Haemophilus parasuis).